We begin with the raw amino-acid sequence, 314 residues long: Beta-lactamase 2 (314 aa).

The signal sequence occupies residues 1-26 (MLHTRIRRATLGAVAALSLVPVMACG). Positions 32–47 (DAAEPAGSAPSSSAAA) are enriched in low complexity. The disordered stretch occupies residues 32-51 (DAAEPAGSAPSSSAAAHKPG). The active-site Acyl-ester intermediate is the serine 96. A substrate-binding site is contributed by 258–260 (KTG).

It belongs to the class-A beta-lactamase family.

The catalysed reaction is a beta-lactam + H2O = a substituted beta-amino acid. This Streptomyces cacaoi protein is Beta-lactamase 2 (blaU).